The chain runs to 111 residues: Flagellar hook-basal body complex protein FliE (111 aa).

Belongs to the FliE family.

It localises to the bacterial flagellum basal body. This Brucella abortus (strain S19) protein is Flagellar hook-basal body complex protein FliE.